We begin with the raw amino-acid sequence, 308 residues long: Glutaminase (308 aa).

Substrate-binding residues include S66, N117, E161, N168, Y192, Y244, and V262.

Belongs to the glutaminase family. As to quaternary structure, homotetramer.

It carries out the reaction L-glutamine + H2O = L-glutamate + NH4(+). The protein is Glutaminase of Salmonella arizonae (strain ATCC BAA-731 / CDC346-86 / RSK2980).